A 234-amino-acid chain; its full sequence is Ribose-5-phosphate isomerase A (234 aa).

Substrate is bound by residues 28 to 31 (TGST), 83 to 86 (DGAD), and 96 to 99 (KGGG). The Proton acceptor role is filled by E105. K123 is a binding site for substrate.

The protein belongs to the ribose 5-phosphate isomerase family. As to quaternary structure, homodimer.

The enzyme catalyses aldehydo-D-ribose 5-phosphate = D-ribulose 5-phosphate. The protein operates within carbohydrate degradation; pentose phosphate pathway; D-ribose 5-phosphate from D-ribulose 5-phosphate (non-oxidative stage): step 1/1. In terms of biological role, catalyzes the reversible conversion of ribose-5-phosphate to ribulose 5-phosphate. The polypeptide is Ribose-5-phosphate isomerase A (Bartonella quintana (strain Toulouse) (Rochalimaea quintana)).